A 305-amino-acid polypeptide reads, in one-letter code: Tyrosine recombinase XerC (305 aa).

Residues 4 to 95 (TSIQELINKW…AVKNFYKFLE (92 aa)) form the Core-binding (CB) domain. Positions 116–298 (LLPKSLSEDD…SIKHLVSVYT (183 aa)) constitute a Tyr recombinase domain. Catalysis depends on residues R159, K182, H250, R253, and H276. The active-site O-(3'-phospho-DNA)-tyrosine intermediate is Y285.

The protein belongs to the 'phage' integrase family. XerC subfamily. In terms of assembly, forms a cyclic heterotetrameric complex composed of two molecules of XerC and two molecules of XerD.

The protein localises to the cytoplasm. Site-specific tyrosine recombinase, which acts by catalyzing the cutting and rejoining of the recombining DNA molecules. The XerC-XerD complex is essential to convert dimers of the bacterial chromosome into monomers to permit their segregation at cell division. It also contributes to the segregational stability of plasmids. The sequence is that of Tyrosine recombinase XerC from Rickettsia canadensis (strain McKiel).